Here is a 1039-residue protein sequence, read N- to C-terminus: 3',5'-cyclic-AMP phosphodiesterase 4 (1039 aa).

Positions 1–29 (MFNNNNNDKINNTMMSNNPSGQIINLESI) are cleaved as a signal peptide. Residues Asn-11, Asn-34, and Asn-37 are each glycosylated (N-linked (GlcNAc...) asparagine). The Extracellular portion of the chain corresponds to 30–201 (DCNSNLSNTT…KKKVNAESLR (172 aa)). 2 disordered regions span residues 40 to 63 (SIKDSNNNNNNNNNNNNNINNNIN) and 116 to 181 (IIPN…NNSI). Residues 45 to 63 (NNNNNNNNNNNNNINNNIN) are compositionally biased toward low complexity. Residues Asn-119, Asn-124, Asn-131, Asn-167, and Asn-178 are each glycosylated (N-linked (GlcNAc...) asparagine). Residues 202 to 222 (GPIIFQNFILYTFFLIVIGTA) form a helical membrane-spanning segment. Residues 223-226 (EGTS) lie on the Cytoplasmic side of the membrane. A helical transmembrane segment spans residues 227-247 (WAPEIRVANFVPYCVMCVVLL). The Extracellular portion of the chain corresponds to 248 to 256 (EFNRLHKKP). A helical transmembrane segment spans residues 257 to 277 (LLRIIFPLYTSNIPFAYMCIF). At 278–283 (SREARK) the chain is on the cytoplasmic side. A helical membrane pass occupies residues 284-304 (YVLISLLFFASCLCIFLQSGI). Over 305–310 (PDLRKH) the chain is Extracellular. Residues 311–331 (IVIFCIIFMINYGCCILFMDW) form a helical membrane-spanning segment. The Cytoplasmic portion of the chain corresponds to 332–356 (FYIDTTGTKPYRGRILATKIHWGEE). A helical transmembrane segment spans residues 357–377 (ATILVSMALLGCIFIVLEKFI). At 378–1039 (KSYARCVAEQ…LTQSNYLIVV (662 aa)) the chain is on the extracellular side. A coiled-coil region spans residues 384–414 (VAEQHYQIQCLQKEKEKLQTEINISLKKLDL). Residues Asn-406, Asn-430, Asn-500, and Asn-515 are each glycosylated (N-linked (GlcNAc...) asparagine). One can recognise a PDEase domain in the interval 533–973 (PEITDQGIQE…QQLQQQQQQQ (441 aa)). Catalysis depends on His-609, which acts as the Proton donor. 3 residues coordinate a divalent metal cation: His-613, His-648, and Asp-649. The interval 738–835 (FPTTTNTQQP…NNSNSNNQNQ (98 aa)) is disordered. The span at 740 to 835 (TTTNTQQPSS…NNSNSNNQNQ (96 aa)) shows a compositional bias: low complexity. N-linked (GlcNAc...) asparagine glycans are attached at residues Asn-769, Asn-791, Asn-795, Asn-804, Asn-809, Asn-823, and Asn-826. An a divalent metal cation-binding site is contributed by Asp-861. N-linked (GlcNAc...) asparagine glycans are attached at residues Asn-874, Asn-944, Asn-1018, and Asn-1023. Residues 978-1019 (QQQQQQLHHHQQQQQFQHQQHQQQLQHQHQQQLNNQNQNQNQ) show a composition bias toward low complexity. The interval 978-1033 (QQQQQQLHHHQQQQQFQHQQHQQQLQHQHQQQLNNQNQNQNQSNSNNSNSFGLTQS) is disordered. Residues 1020 to 1033 (SNSNNSNSFGLTQS) show a composition bias toward polar residues.

The protein belongs to the cyclic nucleotide phosphodiesterase family. The cofactor is a divalent metal cation.

It localises to the cell membrane. The enzyme catalyses 3',5'-cyclic AMP + H2O = AMP + H(+). Its activity is regulated as follows. Inhibited by 3-isobutyl-1-methylxanthine (IBMX). In terms of biological role, phosphodiesterase specific for extracellular cAMP. Involved in the degradation of extracellular cAMP specifically during multicellular development. This is 3',5'-cyclic-AMP phosphodiesterase 4 (Pde4) from Dictyostelium discoideum (Social amoeba).